Here is a 108-residue protein sequence, read N- to C-terminus: Large ribosomal subunit protein bL21 (108 aa).

It belongs to the bacterial ribosomal protein bL21 family. Part of the 50S ribosomal subunit. Contacts protein L20.

This protein binds to 23S rRNA in the presence of protein L20. The sequence is that of Large ribosomal subunit protein bL21 from Acidobacterium capsulatum (strain ATCC 51196 / DSM 11244 / BCRC 80197 / JCM 7670 / NBRC 15755 / NCIMB 13165 / 161).